A 216-amino-acid chain; its full sequence is Protein YabP (216 aa).

The protein is Protein YabP (yabP) of Escherichia coli (strain K12).